Consider the following 500-residue polypeptide: Nitrate/nitrite transporter NrtP (500 aa).

The next 12 membrane-spanning stretches (helical) occupy residues 19-39, 52-72, 79-99, 109-129, 147-167, 175-195, 220-240, 247-267, 364-384, 389-409, 425-445, and 451-471; these read WFAF…ATTI, TLGI…GMLL, ITYS…ALAQ, LLMG…AEWF, FGAF…SFFS, LAIA…YNTV, SFWA…LLAW, IHFL…GLFA, WTMT…HFIN, IPVA…GCGA, IAGN…TIFS, and TLFS…AFFL.

It belongs to the major facilitator superfamily. Nitrate/nitrite porter (TC 2.A.1.8) family.

The protein resides in the cell inner membrane. Its function is as follows. Transport system for both nitrate and nitrite, with much higher affinity for nitrate than for nitrite. The protein is Nitrate/nitrite transporter NrtP of Nostoc punctiforme (strain ATCC 29133 / PCC 73102).